A 573-amino-acid chain; its full sequence is Glutathione hydrolase 5 proenzyme (573 aa).

At 1-8 (MAWGHRAT) the chain is on the cytoplasmic side. A helical; Signal-anchor for type II membrane protein membrane pass occupies residues 9–29 (VCLVLLGVGLGLVIVVLAAVL). Topologically, residues 30–573 (SPRQASCGPG…LRKAGKASGY (544 aa)) are extracellular. An N-linked (GlcNAc...) asparagine glycan is attached at Asn98. L-glutamate is bound at residue Arg110. 6 N-linked (GlcNAc...) asparagine glycosylation sites follow: Asn185, Asn204, Asn277, Asn303, Asn347, and Asn378. Thr389 functions as the Nucleophile in the catalytic mechanism. Residues Thr407, Glu428, and 454 to 455 (SS) each bind L-glutamate.

The protein belongs to the gamma-glutamyltransferase family. In terms of assembly, heterodimer composed of the light and heavy chains. The active site is located in the light chain. Post-translationally, cleaved by autocatalysis into a large and a small subunit. In terms of processing, glycosylated. In terms of tissue distribution, very low level of expression. Detected in spleen lymphocytes, medullary and paracortical thymic lymphocytes, lung interstitial cells, bronchial epithelium, proximal tubules in kidney, crypt cells in small intestine, neurons in brain stem and cerebral cortex and in Purkinje cells. As to expression, very low expression.

Its subcellular location is the membrane. It catalyses the reaction glutathione + H2O = L-cysteinylglycine + L-glutamate. The enzyme catalyses an S-substituted glutathione + H2O = an S-substituted L-cysteinylglycine + L-glutamate. The catalysed reaction is leukotriene C4 + H2O = leukotriene D4 + L-glutamate. It carries out the reaction S-[(2E,6E,10E)-geranylgeranyl]-L-glutathione + H2O = S-[(2E,6E,10E)-geranylgeranyl]-L-cysteinylglycine + L-glutamate. It catalyses the reaction an N-terminal (5-L-glutamyl)-[peptide] + an alpha-amino acid = 5-L-glutamyl amino acid + an N-terminal L-alpha-aminoacyl-[peptide]. It functions in the pathway lipid metabolism; leukotriene D4 biosynthesis. It participates in sulfur metabolism; glutathione metabolism. With respect to regulation, inhibited by serine-borate. Its function is as follows. Cleaves the gamma-glutamyl bond of extracellular glutathione tripeptide (gamma-Glu-Cys-Gly) and certain glutathione conjugates. Hydrolyzes glutathione releasing L-Glu and Cys-Gly dipeptide which is further metabolized to maintain extracellular cysteine levels but also to provide cysteine necessary for intracellular glutathione synthesis. Among glutathione-S-conjugates metabolizes leukotriene C4 (LTC4) and S-geranylgeranyl-glutathione (GGG), but is inactive toward gamma-glutamyl leucine. Converts extracellular LTC4 to LTD4 during acute inflammatory response. Acts as a negative regulator of GGG bioactivity. GGT5 (via GGG catabolism) and ABCC1 (via extracellular transport) establish GGG gradients within lymphoid tissues to position P2RY8-positive lymphocytes at germinal centers in lymphoid follicles and restrict their chemotactic transmigration from blood vessels to bone marrow parenchyma. The transpeptidation reaction, i.e. the transfer of gamma-glutamyl moiety to an acceptor molecule to yield a new gamma-glutamyl compound requires high concentration of dipeptide acceptor and is considered nonphysiological. The sequence is that of Glutathione hydrolase 5 proenzyme (Ggt5) from Mus musculus (Mouse).